The chain runs to 391 residues: Phosphoglycerate kinase (391 aa).

Substrate contacts are provided by residues 21–23 (DLN), arginine 36, 59–62 (HLGR), arginine 113, and arginine 146. ATP-binding positions include lysine 197, glutamate 319, and 345-348 (GGDT).

This sequence belongs to the phosphoglycerate kinase family. In terms of assembly, monomer.

It is found in the cytoplasm. The catalysed reaction is (2R)-3-phosphoglycerate + ATP = (2R)-3-phospho-glyceroyl phosphate + ADP. It participates in carbohydrate degradation; glycolysis; pyruvate from D-glyceraldehyde 3-phosphate: step 2/5. The polypeptide is Phosphoglycerate kinase (Xanthomonas oryzae pv. oryzae (strain MAFF 311018)).